A 416-amino-acid polypeptide reads, in one-letter code: MAYLFTSESVSEGHPDKVADQISDALIDNFLAFDADSKVACETLVTTGQVILAGEVKSNTYLDVQQIAREVIRKIGYTKSEYMFEANSCGILSAIHEQSADINQGVDRAKPEEQGAGDQGMMFGYATNETENFMPLALDLSHKLLQELAILRRENKEITYLRPDAKSQVTLEYSDDNKPTRIDAIVISTQHDDFDEEAAMLAKIKKDVIEILIPRIIAKNPEHAHLFNDKINYHINPTGKFVIGGPHGDTGLTGRKIIVDTYGGKGAHGGGAFSGKDPSKVDRSAAYATRHIAKNLVAAGVADEILVQVSYAIGVAEPMGIFIETYGTSKVNLTNGEIAKKVEAIFDMRPYFIEQRLKLRNPIYSETAAYGHMGRKPETVTKTFSAPGGNEKTVTVELFTWEKLDFVDQVKTAFGL.

H14 provides a ligand contact to ATP. Position 16 (D16) interacts with Mg(2+). E42 serves as a coordination point for K(+). 2 residues coordinate L-methionine: E55 and Q98. The segment at 98 to 108 (QSADINQGVDR) is flexible loop. ATP contacts are provided by residues 164–166 (DAK), 240–241 (KF), D249, 255–256 (RK), A272, and K276. D249 provides a ligand contact to L-methionine. Position 280 (K280) interacts with L-methionine.

It belongs to the AdoMet synthase family. In terms of assembly, homotetramer; dimer of dimers. Mg(2+) serves as cofactor. K(+) is required as a cofactor.

The protein resides in the cytoplasm. It carries out the reaction L-methionine + ATP + H2O = S-adenosyl-L-methionine + phosphate + diphosphate. It participates in amino-acid biosynthesis; S-adenosyl-L-methionine biosynthesis; S-adenosyl-L-methionine from L-methionine: step 1/1. Functionally, catalyzes the formation of S-adenosylmethionine (AdoMet) from methionine and ATP. The overall synthetic reaction is composed of two sequential steps, AdoMet formation and the subsequent tripolyphosphate hydrolysis which occurs prior to release of AdoMet from the enzyme. This Flavobacterium johnsoniae (strain ATCC 17061 / DSM 2064 / JCM 8514 / BCRC 14874 / CCUG 350202 / NBRC 14942 / NCIMB 11054 / UW101) (Cytophaga johnsonae) protein is S-adenosylmethionine synthase.